We begin with the raw amino-acid sequence, 152 residues long: ASP external chaperone (152 aa).

Positions 1 to 22 (MNKPVTLLLATLLAPLSGQLCA) are cleaved as a signal peptide.

In terms of assembly, forms a complex with the serine protease ASP in the periplasm. After translocation of the ASP-ORF2 complex from the periplasm to the extracellular space, the complex is dissociated in a pH-dependent manner.

Its subcellular location is the periplasm. The protein localises to the secreted. With respect to regulation, degraded by ASP after secretion and dissociation of the ASP-ORF2 complex. In terms of biological role, required for the production of the active form of the Aeromonas extracellular serine protease (ASP). Acts as a chaperone that helps ASP form an active structure in the periplasm. Formation of a complex with ASP in the periplasm also inactivates the protease activity and likely protects ASP from intrinsic proteases. Dissociation of the ASP-ORF2 complex after secretion in the extracellular space generates an active ASP. This is ASP external chaperone from Aeromonas sobria.